The chain runs to 1256 residues: Bifunctional autolysin (1256 aa).

The signal sequence occupies residues 1-29 (MAKKFNYKLPSMVALTLVGSAVTAHQVQA). Residues 103-138 (GDTRANQSATTNNTQPVAKSTSTTAPKTNTNVTNAG) show a composition bias toward polar residues. 3 disordered regions span residues 103-151 (GDTR…NSEN), 173-219 (AAAP…KYKP), and 419-440 (TQST…PSTG). 2 stretches are compositionally biased toward low complexity: residues 173–196 (AAAP…KVTT) and 421–439 (STTT…KPST). Residues 199–775 (ASAQPRSVAA…AVAQPKTAVK (577 aa)) form an N-acetylmuramoyl-L-alanine amidase region. 7 GW domains span residues 443-517 (TVAA…YNTA), 519-593 (SPVN…DTAK), 612-686 (TVSS…YNNA), 688-762 (SPVN…VPAA), 784-859 (TTQT…VQNL), 861-936 (KEVK…APTA), and 943-1017 (AAKD…KELI). The endo-beta-N-acetylglucosaminidase stretch occupies residues 776-1256 (AYTVTKPQTT…GKYFDIPQYK (481 aa)).

In the N-terminal section; belongs to the N-acetylmuramoyl-L-alanine amidase 2 family. It in the C-terminal section; belongs to the glycosyl hydrolase 73 family. As to quaternary structure, oligomer; forms a ring structure at the cell surface which is important for efficient partitioning of daughter cells after cell division. In terms of processing, undergoes proteolytic processing to generate the two extracellular lytic enzymes, probably at the septal region on the cell surface.

The protein localises to the secreted. The enzyme catalyses Hydrolyzes the link between N-acetylmuramoyl residues and L-amino acid residues in certain cell-wall glycopeptides.. It catalyses the reaction an N(4)-(oligosaccharide-(1-&gt;3)-[oligosaccharide-(1-&gt;6)]-beta-D-Man-(1-&gt;4)-beta-D-GlcNAc-(1-&gt;4)-alpha-D-GlcNAc)-L-asparaginyl-[protein] + H2O = an oligosaccharide-(1-&gt;3)-[oligosaccharide-(1-&gt;6)]-beta-D-Man-(1-&gt;4)-D-GlcNAc + N(4)-(N-acetyl-beta-D-glucosaminyl)-L-asparaginyl-[protein]. In terms of biological role, endohydrolysis of the di-N-acetylchitobiosyl unit in high-mannose glycopeptides and glycoproteins containing the -[(Man)5(GlcNAc)2]-Asn structure. One N-acetyl-D-glucosamine residue remains attached to the protein; the rest of the oligosaccharide is released intact. Cleaves the peptidoglycan connecting the daughter cells at the end of the cell division cycle, resulting in the separation of the two newly divided cells. Acts as an autolysin in penicillin-induced lysis. This Staphylococcus aureus (strain MW2) protein is Bifunctional autolysin (atl).